A 61-amino-acid chain; its full sequence is Delta-actitoxin-Avd2c (61 aa).

The signal sequence occupies residues 1 to 20; the sequence is MMNRLLVFLMLGAFMLVVSA. Residues 21–31 constitute a propeptide that is removed on maturation; sequence NDAYGGDESLG. 3 cysteine pairs are disulfide-bonded: C36–C51, C37–C45, and C39–C56.

The protein belongs to the sea anemone short toxin (type III) family.

The protein resides in the secreted. It is found in the nematocyst. In terms of biological role, sodium channel inhibitor. 5 uM completely inhibits voltage-gated sodium channel (Nav) inactivation. This chain is Delta-actitoxin-Avd2c, found in Anemonia viridis (Snakelocks anemone).